We begin with the raw amino-acid sequence, 131 residues long: uncharacterized protein (131 aa).

Residues 60–100 (GRHTLSQVPNKGHEKASAVQLPEKQGTDQSRRGPTSAVTKA) form a disordered region. Positions 91-100 (RGPTSAVTKA) are enriched in polar residues.

This is an uncharacterized protein from Homo sapiens (Human).